The primary structure comprises 1191 residues: Pyruvate-flavodoxin oxidoreductase (1191 aa).

2 consecutive 4Fe-4S ferredoxin-type domains span residues 687–716 and 744–773; these read QVCS…VKAV and YVLA…TGAR. 12 residues coordinate [4Fe-4S] cluster: Cys-696, Cys-699, Cys-702, Cys-706, Cys-753, Cys-756, Cys-759, Cys-763, Cys-825, Cys-828, Cys-853, and Cys-1085.

Belongs to the pyruvate:ferredoxin/flavodoxin oxidoreductase family. [4Fe-4S] cluster is required as a cofactor.

It carries out the reaction oxidized [flavodoxin] + pyruvate + CoA + 2 H(+) = reduced [flavodoxin] + acetyl-CoA + CO2. Its function is as follows. Oxidoreductase required for the transfer of electrons from pyruvate to flavodoxin, which reduces nitrogenase. This Rhodospirillum rubrum (strain ATCC 11170 / ATH 1.1.1 / DSM 467 / LMG 4362 / NCIMB 8255 / S1) protein is Pyruvate-flavodoxin oxidoreductase (nifJ).